We begin with the raw amino-acid sequence, 318 residues long: Ribosomal RNA small subunit methyltransferase A (318 aa).

Positions 40, 42, 67, 88, 118, and 137 each coordinate S-adenosyl-L-methionine. Over residues Ala296–Gly305 the composition is skewed to basic and acidic residues. Positions Ala296 to Cys318 are disordered.

It belongs to the class I-like SAM-binding methyltransferase superfamily. rRNA adenine N(6)-methyltransferase family. RsmA subfamily.

It is found in the cytoplasm. It carries out the reaction adenosine(1518)/adenosine(1519) in 16S rRNA + 4 S-adenosyl-L-methionine = N(6)-dimethyladenosine(1518)/N(6)-dimethyladenosine(1519) in 16S rRNA + 4 S-adenosyl-L-homocysteine + 4 H(+). Its function is as follows. Specifically dimethylates two adjacent adenosines (A1518 and A1519) in the loop of a conserved hairpin near the 3'-end of 16S rRNA in the 30S particle. May play a critical role in biogenesis of 30S subunits. In Mycobacterium avium (strain 104), this protein is Ribosomal RNA small subunit methyltransferase A.